A 64-amino-acid chain; its full sequence is MIVVQVKDNEPIERALKRFKKKIDRVKVLKEVKSRRYYTKPSIKRREEKLKAIYKQHLQQQANG.

It belongs to the bacterial ribosomal protein bS21 family.

This is Small ribosomal subunit protein bS21 from Amoebophilus asiaticus (strain 5a2).